Consider the following 488-residue polypeptide: Protein nucleotidyltransferase YdiU (488 aa).

ATP-binding residues include glycine 91, glycine 93, arginine 94, lysine 114, aspartate 126, glycine 127, arginine 177, and arginine 184. The active-site Proton acceptor is aspartate 253. 2 residues coordinate Mg(2+): asparagine 254 and aspartate 263. Aspartate 263 is a binding site for ATP.

It belongs to the SELO family. The cofactor is Mg(2+). Mn(2+) serves as cofactor.

It carries out the reaction L-seryl-[protein] + ATP = 3-O-(5'-adenylyl)-L-seryl-[protein] + diphosphate. The enzyme catalyses L-threonyl-[protein] + ATP = 3-O-(5'-adenylyl)-L-threonyl-[protein] + diphosphate. The catalysed reaction is L-tyrosyl-[protein] + ATP = O-(5'-adenylyl)-L-tyrosyl-[protein] + diphosphate. It catalyses the reaction L-histidyl-[protein] + UTP = N(tele)-(5'-uridylyl)-L-histidyl-[protein] + diphosphate. It carries out the reaction L-seryl-[protein] + UTP = O-(5'-uridylyl)-L-seryl-[protein] + diphosphate. The enzyme catalyses L-tyrosyl-[protein] + UTP = O-(5'-uridylyl)-L-tyrosyl-[protein] + diphosphate. Nucleotidyltransferase involved in the post-translational modification of proteins. It can catalyze the addition of adenosine monophosphate (AMP) or uridine monophosphate (UMP) to a protein, resulting in modifications known as AMPylation and UMPylation. The chain is Protein nucleotidyltransferase YdiU from Bacillus cereus (strain ZK / E33L).